The sequence spans 330 residues: GRB2-related adapter protein 2 (330 aa).

In terms of domain architecture, SH3 1 spans 1–56 (MEAVAKFDFTASGEDELSFHTGDVLKILSNQEEWFKAELGSQEGYVPKNFIDIQFP). At tyrosine 45 the chain carries Phosphotyrosine. An SH2 domain is found at 58-149 (WFHEGLSRHQ…QKQIFLRDRT (92 aa)). Lysine 106 carries the post-translational modification N6-acetyllysine. The disordered stretch occupies residues 143–244 (IFLRDRTRED…GSLDINDGHC (102 aa)). The span at 144–164 (FLRDRTREDQGHRGNSLDRRS) shows a compositional bias: basic and acidic residues. The residue at position 187 (serine 187) is a Phosphoserine. Residues 209-222 (PAPQQLQQPPQQRY) show a composition bias toward low complexity. A Phosphoserine modification is found at serine 236. Threonine 262 bears the Phosphothreonine mark. The SH3 2 domain occupies 271 to 330 (GRVRWARALYDFEALEDDELGFHSGEVVEVLDSSNPSWWTGRLHNKLGLFPANYVAPMTR).

This sequence belongs to the GRB2/sem-5/DRK family. Interacts with phosphorylated LIME1 upon TCR activation. Interacts with phosphorylated LAT and LAX1 upon TCR activation. Interacts with SHB. Interacts with PTPN23.

The protein localises to the nucleus. It localises to the cytoplasm. The protein resides in the endosome. Its function is as follows. Interacts with SLP-76 to regulate NF-AT activation. Binds to tyrosine-phosphorylated shc. In Homo sapiens (Human), this protein is GRB2-related adapter protein 2 (GRAP2).